The following is a 453-amino-acid chain: uncharacterized protein (453 aa).

Its function is as follows. The presence of the two linear plasmids, termed pGKL1 and pGKL2, in strains of Kluyveromyces lactis confers the killer phenotype to the host cell, by promoting the secretion of a toxin able to inhibit the growth of sensitive strains. This is an uncharacterized protein from Kluyveromyces lactis (strain ATCC 8585 / CBS 2359 / DSM 70799 / NBRC 1267 / NRRL Y-1140 / WM37) (Yeast).